The following is a 718-amino-acid chain: Sodium/myo-inositol cotransporter (718 aa).

Residues 1–9 (MRAVLETAD) are Extracellular-facing. The chain crosses the membrane as a helical span at residues 10–29 (IAIVALYFILVMCIGFFAMW). Over 30–38 (KSNRSTVSG) the chain is Cytoplasmic. The helical transmembrane segment at 39–57 (YFLAGRSMTWVAIGASLFV) threads the bilayer. At 58–86 (SNIGSEHFIGLAGSGAASGFAVGAWEFNA) the chain is on the extracellular side. A helical membrane pass occupies residues 87 to 110 (LLLLQLLGWVFIPIYIRSGVYTMP). Topologically, residues 111 to 123 (EYLSKRFGGHRIQ) are cytoplasmic. A helical membrane pass occupies residues 124–144 (VYFAALSLILYIFTKLSVDLY). Over 145–157 (SGALFIQESLGWN) the chain is Extracellular. A helical membrane pass occupies residues 158–183 (LYVSVILLIGMTALLTVTGGLVAVIY). The Cytoplasmic portion of the chain corresponds to 184 to 186 (TDT). The chain crosses the membrane as a helical span at residues 187–205 (LQALLMIVGALTLMIISMM). The Extracellular portion of the chain corresponds to 206–303 (EIGGFEEVKR…HAKGSTLMAG (98 aa)). The N-linked (GlcNAc...) asparagine glycan is linked to Asn232. The helical transmembrane segment at 304–324 (FLKLLPMFIIVVPGMISRILF) threads the bilayer. Topologically, residues 325–353 (ADDIACINPEHCMQVCGSRAGCSNIAYPR) are cytoplasmic. Residues 354 to 376 (LVMKLVPVGLRGLMMAVMIAALM) form a helical membrane-spanning segment. At 377–406 (SDLDSIFNSASTIFTLDVYKLIRRSASSRE) the chain is on the extracellular side. The chain crosses the membrane as a helical span at residues 407-430 (LMIVGRIFVAFMVVISIAWVPIIV). The Cytoplasmic segment spans residues 431 to 443 (EMQGGQMYLYIQE). A helical membrane pass occupies residues 444-462 (VADYLTPPVAALFLLAIFW). Over 463 to 510 (KRCNEQGAFYGGMAGFVLGAVRLTLAFAYRAPECDQPDNRPGFIKDIH) the chain is Extracellular. A helical transmembrane segment spans residues 511 to 532 (YMYVATALFWVTGLITVIVSLL). Topologically, residues 533-695 (TPPPTKEQIR…QMLEEPPQVK (163 aa)) are cytoplasmic. Phosphoserine occurs at positions 594 and 632. A helical membrane pass occupies residues 696–716 (LILNIGLFAVCSLGIFMFVYF). The Extracellular segment spans residues 717-718 (SL).

This sequence belongs to the sodium:solute symporter (SSF) (TC 2.A.21) family. Interacts with KCNQ2 (via the pore module). Interacts with KCNQ1; this interaction is direct. Forms coregulatory complexes with ion channels KCNQ2-KCNQ3 and KCNQ1-KCNE2. As to expression, kidney cortex and medulla.

It localises to the apical cell membrane. It is found in the basolateral cell membrane. The enzyme catalyses myo-inositol(out) + 2 Na(+)(out) = myo-inositol(in) + 2 Na(+)(in). It carries out the reaction scyllo-inositol(out) + 2 Na(+)(out) = scyllo-inositol(in) + 2 Na(+)(in). Its activity is regulated as follows. Inhibited by phlorizin and phloretin. In terms of biological role, electrogenic Na(+)-coupled sugar symporter that actively transports myo-inositol and its stereoisomer scyllo-inositol across the plasma membrane, with a Na(+) to sugar coupling ratio of 2:1. Maintains myo-inositol concentration gradient that defines cell volume and fluid balance during osmotic stress, in particular in the fetoplacental unit and central nervous system. Forms coregulatory complexes with voltage-gated K(+) ion channels, allosterically altering ion selectivity, voltage dependence and gating kinetics of the channel. In turn, K(+) efflux through the channel forms a local electrical gradient that modulates electrogenic Na(+)-coupled myo-inositol influx through the transporter. Associates with KCNQ1-KCNE2 channel in the apical membrane of choroid plexus epithelium and regulates the myo-inositol gradient between blood and cerebrospinal fluid with an impact on neuron excitability. Associates with KCNQ2-KCNQ3 channel altering ion selectivity, increasing Na(+) and Cs(+) permeation relative to K(+) permeation. Provides myo-inositol precursor for biosynthesis of phosphoinositides such as PI(4,5)P2, thus indirectly affecting the activity of phosphoinositide-dependent ion channels and Ca(2+) signaling upon osmotic stress. Has very low affinity for sugars such as L-fucose and L-xylose, with an affinity about three orders of magnitude lower than myo-inositol. The polypeptide is Sodium/myo-inositol cotransporter (SLC5A3) (Canis lupus familiaris (Dog)).